The sequence spans 112 residues: Small ribosomal subunit protein uS17 (112 aa).

The protein belongs to the universal ribosomal protein uS17 family. As to quaternary structure, part of the 30S ribosomal subunit.

Its function is as follows. One of the primary rRNA binding proteins, it binds specifically to the 5'-end of 16S ribosomal RNA. The sequence is that of Small ribosomal subunit protein uS17 from Haloarcula marismortui (strain ATCC 43049 / DSM 3752 / JCM 8966 / VKM B-1809) (Halobacterium marismortui).